Consider the following 449-residue polypeptide: Trigger factor (449 aa).

The PPIase FKBP-type domain maps to 162-243 (GEFVTINITA…ITATKQRELP (82 aa)). Over residues 428–437 (GNEIDPKEYF) the composition is skewed to basic and acidic residues. Residues 428 to 449 (GNEIDPKEYFGEEEVAETESEA) form a disordered region. The span at 438–449 (GEEEVAETESEA) shows a compositional bias: acidic residues.

The protein belongs to the FKBP-type PPIase family. Tig subfamily.

It localises to the cytoplasm. The catalysed reaction is [protein]-peptidylproline (omega=180) = [protein]-peptidylproline (omega=0). Functionally, involved in protein export. Acts as a chaperone by maintaining the newly synthesized protein in an open conformation. Functions as a peptidyl-prolyl cis-trans isomerase. This chain is Trigger factor, found in Corynebacterium glutamicum (strain R).